A 382-amino-acid polypeptide reads, in one-letter code: U11/U12 small nuclear ribonucleoprotein 59 kDa protein (382 aa).

Residues 31–63 (NTKNITDQLKQLQDTLNLAKSMEKELEALKMIK) adopt a coiled-coil conformation. Residues 274 to 297 (SEENTTLTTSNKTNNDTDKDSNTN) are disordered. Low complexity predominate over residues 277 to 287 (NTTLTTSNKTN).

Component of the U11/U12 snRNPs that are part of the U12-type spliceosome.

Its subcellular location is the nucleus. In Arabidopsis thaliana (Mouse-ear cress), this protein is U11/U12 small nuclear ribonucleoprotein 59 kDa protein (SNRNP59).